The sequence spans 295 residues: Putative S-adenosyl-L-methionine-dependent methyltransferase Mvan_0910 (295 aa).

S-adenosyl-L-methionine contacts are provided by residues Asp-126 and 155–156; that span reads DL.

The protein belongs to the UPF0677 family.

In terms of biological role, exhibits S-adenosyl-L-methionine-dependent methyltransferase activity. This is Putative S-adenosyl-L-methionine-dependent methyltransferase Mvan_0910 from Mycolicibacterium vanbaalenii (strain DSM 7251 / JCM 13017 / BCRC 16820 / KCTC 9966 / NRRL B-24157 / PYR-1) (Mycobacterium vanbaalenii).